The chain runs to 446 residues: DDB1- and CUL4-associated factor 12 (446 aa).

A compositionally biased stretch (basic residues) spans 1–12 (MTRRAVSRKRRA). Positions 1 to 33 (MTRRAVSRKRRAAPGTGPGEQSDWDHSAHKRKR) are disordered. WD repeat units follow at residues 132-173 (SHQS…PVCV), 177-215 (GHND…LSKS), 245-284 (PVNC…AKLL), and 333-370 (EQGS…FLED).

Belongs to the WD repeat DCAF12 family. Component of the DCX(DCAF12) E3 ubiquitin ligase complex, at least composed of cul4 (cul4a or cul4b), ddb1, dcaf12 and rbx1.

It localises to the cytoplasm. The protein localises to the cytoskeleton. It is found in the microtubule organizing center. Its subcellular location is the centrosome. The protein resides in the nucleus. It functions in the pathway protein modification; protein ubiquitination. In terms of biological role, substrate-recognition component of a DCX (DDB1-CUL4-X-box) E3 ubiquitin-protein ligase complex of the DesCEND (destruction via C-end degrons) pathway, which recognizes a C-degron located at the extreme C terminus of target proteins, leading to their ubiquitination and degradation. The C-degron recognized by the DesCEND pathway is usually a motif of less than ten residues and can be present in full-length proteins, truncated proteins or proteolytically cleaved forms. The DCX(DCAF12) complex specifically recognizes proteins with a diglutamate (Glu-Glu) at the C-terminus leading to their ubiquitination and degradation. Also directly recognizes the C-terminal glutamate-leucine (Glu-Leu) degron as an alternative degron in proteins leading to their ubiquitination and degradation. The protein is DDB1- and CUL4-associated factor 12 of Xenopus tropicalis (Western clawed frog).